The following is a 240-amino-acid chain: Probable Ni/Fe-hydrogenase B-type cytochrome subunit (240 aa).

Helical transmembrane passes span 31–51, 75–95, 142–163, and 196–213; these read LWHW…YFIG, FAAG…AFVG, LAMF…FALY, and LGMW…YLAA.

It belongs to the HupC/HyaC/HydC family.

Its subcellular location is the cell membrane. In terms of biological role, probable b-type cytochrome. This Azotobacter chroococcum mcd 1 protein is Probable Ni/Fe-hydrogenase B-type cytochrome subunit (hupZ).